Here is a 578-residue protein sequence, read N- to C-terminus: 15-cis-phytoene desaturase, chloroplastic/chromoplastic (578 aa).

Residues 1 to 87 (MDTGCLSSMN…PLENTINFLE (87 aa)) constitute a chloroplast and chromoplast transit peptide. Residues alanine 115, 134–135 (EA), lysine 142, 159–160 (HI), and tyrosine 165 each bind FAD. Arginine 300 serves as a coordination point for substrate. Positions 342 and 531 each coordinate FAD. Position 539 (alanine 539) interacts with substrate. Methionine 541 lines the FAD pocket.

The protein belongs to the carotenoid/retinoid oxidoreductase family. Homotetramer. Homotetramer is the active form of the enzyme. FAD serves as cofactor.

The protein resides in the plastid. It localises to the chloroplast. The protein localises to the chromoplast. Its subcellular location is the membrane. The enzyme catalyses 2 a plastoquinone + 15-cis-phytoene = 9,9',15-tri-cis-zeta-carotene + 2 a plastoquinol. It functions in the pathway carotenoid biosynthesis; lycopene biosynthesis. Inhibited by the herbicide norflurazon (NFZ). Its function is as follows. Converts phytoene into zeta-carotene via the intermediary of phytofluene by the symmetrical introduction of two double bonds at the C-11 and C-11' positions of phytoene with a concomitant isomerization of two neighboring double bonds at the C9 and C9' positions from trans to cis. Active with decylplastoquinone (DPQ) as substrate. Also active with other benzoquinones, which are strongly preferred over naphthoquinones as substrates. The polypeptide is 15-cis-phytoene desaturase, chloroplastic/chromoplastic (PDS1) (Oryza sativa subsp. indica (Rice)).